The sequence spans 148 residues: Large ribosomal subunit protein bL9 (148 aa).

The segment at 46–65 (QLQQQNKHAEQEREQEIEDA) is disordered. The span at 52 to 65 (KHAEQEREQEIEDA) shows a compositional bias: basic and acidic residues.

Belongs to the bacterial ribosomal protein bL9 family.

Functionally, binds to the 23S rRNA. The protein is Large ribosomal subunit protein bL9 of Staphylococcus carnosus (strain TM300).